The chain runs to 107 residues: Large ribosomal subunit protein uL24 (107 aa).

The protein belongs to the universal ribosomal protein uL24 family. As to quaternary structure, part of the 50S ribosomal subunit.

Functionally, one of two assembly initiator proteins, it binds directly to the 5'-end of the 23S rRNA, where it nucleates assembly of the 50S subunit. One of the proteins that surrounds the polypeptide exit tunnel on the outside of the subunit. This Thiobacillus denitrificans (strain ATCC 25259 / T1) protein is Large ribosomal subunit protein uL24.